The sequence spans 250 residues: Ubiquinone/menaquinone biosynthesis C-methyltransferase UbiE (250 aa).

S-adenosyl-L-methionine-binding positions include Thr74, Asp94, 122-123 (DA), and Ser139.

Belongs to the class I-like SAM-binding methyltransferase superfamily. MenG/UbiE family.

The enzyme catalyses a 2-demethylmenaquinol + S-adenosyl-L-methionine = a menaquinol + S-adenosyl-L-homocysteine + H(+). It carries out the reaction a 2-methoxy-6-(all-trans-polyprenyl)benzene-1,4-diol + S-adenosyl-L-methionine = a 5-methoxy-2-methyl-3-(all-trans-polyprenyl)benzene-1,4-diol + S-adenosyl-L-homocysteine + H(+). It participates in quinol/quinone metabolism; menaquinone biosynthesis; menaquinol from 1,4-dihydroxy-2-naphthoate: step 2/2. It functions in the pathway cofactor biosynthesis; ubiquinone biosynthesis. Its function is as follows. Methyltransferase required for the conversion of demethylmenaquinol (DMKH2) to menaquinol (MKH2) and the conversion of 2-polyprenyl-6-methoxy-1,4-benzoquinol (DDMQH2) to 2-polyprenyl-3-methyl-6-methoxy-1,4-benzoquinol (DMQH2). The sequence is that of Ubiquinone/menaquinone biosynthesis C-methyltransferase UbiE from Ruegeria sp. (strain TM1040) (Silicibacter sp.).